Here is a 99-residue protein sequence, read N- to C-terminus: Small integral membrane protein 14 (99 aa).

The Lumenal portion of the chain corresponds to methionine 1–serine 49. A helical transmembrane segment spans residues glycine 50 to leucine 70. Over arginine 71–aspartate 99 the chain is Cytoplasmic. A disordered region spans residues glycine 77–aspartate 99.

As to expression, ubiquitously expressed.

The protein resides in the endoplasmic reticulum membrane. This is Small integral membrane protein 14 (Smim14) from Mus musculus (Mouse).